A 110-amino-acid chain; its full sequence is Cytochrome c oxidase subunit 4B (110 aa).

3 consecutive transmembrane segments (helical) span residues 29-49 (MIAF…VGYE), 55-75 (FVVP…LYYF), and 89-109 (FIYG…TVVW).

The protein belongs to the cytochrome c oxidase bacterial subunit 4 family.

Its subcellular location is the cell membrane. It carries out the reaction 4 Fe(II)-[cytochrome c] + O2 + 8 H(+)(in) = 4 Fe(III)-[cytochrome c] + 2 H2O + 4 H(+)(out). The sequence is that of Cytochrome c oxidase subunit 4B (caaD) from Bacillus sp. (strain PS3).